The following is a 136-amino-acid chain: Nucleoside diphosphate kinase (136 aa).

Lys-10, Phe-58, Arg-86, Thr-92, Arg-104, and Asn-114 together coordinate ATP. His-117 serves as the catalytic Pros-phosphohistidine intermediate.

The protein belongs to the NDK family. In terms of assembly, homotetramer. It depends on Mg(2+) as a cofactor.

It localises to the cytoplasm. It carries out the reaction a 2'-deoxyribonucleoside 5'-diphosphate + ATP = a 2'-deoxyribonucleoside 5'-triphosphate + ADP. The enzyme catalyses a ribonucleoside 5'-diphosphate + ATP = a ribonucleoside 5'-triphosphate + ADP. Major role in the synthesis of nucleoside triphosphates other than ATP. The ATP gamma phosphate is transferred to the NDP beta phosphate via a ping-pong mechanism, using a phosphorylated active-site intermediate. This is Nucleoside diphosphate kinase from Mycobacterium ulcerans (strain Agy99).